Reading from the N-terminus, the 212-residue chain is Molybdenum cofactor guanylyltransferase (212 aa).

GTP contacts are provided by residues 14–16, lysine 27, asparagine 55, aspartate 73, and aspartate 108; that span reads LAG. Aspartate 108 lines the Mg(2+) pocket.

It belongs to the MobA family. As to quaternary structure, monomer. Mg(2+) is required as a cofactor.

Its subcellular location is the cytoplasm. The enzyme catalyses Mo-molybdopterin + GTP + H(+) = Mo-molybdopterin guanine dinucleotide + diphosphate. Its function is as follows. Transfers a GMP moiety from GTP to Mo-molybdopterin (Mo-MPT) cofactor (Moco or molybdenum cofactor) to form Mo-molybdopterin guanine dinucleotide (Mo-MGD) cofactor. In Bradyrhizobium sp. (strain ORS 278), this protein is Molybdenum cofactor guanylyltransferase.